Here is a 68-residue protein sequence, read N- to C-terminus: MRTSYLLLFTLCLLLSEMASGDNFLTGLGHRSDHYNCVRSGGQCLYSACPIYTRIQGTCYHGKAKCCK.

The first 21 residues, 1–21, serve as a signal peptide directing secretion; that stretch reads MRTSYLLLFTLCLLLSEMASG. Positions 22–32 are excised as a propeptide; sequence DNFLTGLGHRS. 3 disulfides stabilise this stretch: C37-C66, C44-C59, and C49-C67.

Belongs to the beta-defensin family. Monomer. Homodimer.

It localises to the secreted. The protein resides in the membrane. Its function is as follows. Has bactericidal activity. May act as a ligand for C-C chemokine receptor CCR6. Positively regulates the sperm motility and bactericidal activity in a CCR6-dependent manner. Binds to CCR6 and triggers Ca2+ mobilization in the sperm which is important for its motility. This Macaca mulatta (Rhesus macaque) protein is Beta-defensin 1 (DEFB1).